Reading from the N-terminus, the 179-residue chain is Large ribosomal subunit protein uL5 (179 aa).

The protein belongs to the universal ribosomal protein uL5 family. In terms of assembly, part of the 50S ribosomal subunit; part of the 5S rRNA/L5/L18/L25 subcomplex. Contacts the 5S rRNA and the P site tRNA. Forms a bridge to the 30S subunit in the 70S ribosome.

This is one of the proteins that bind and probably mediate the attachment of the 5S RNA into the large ribosomal subunit, where it forms part of the central protuberance. In the 70S ribosome it contacts protein S13 of the 30S subunit (bridge B1b), connecting the 2 subunits; this bridge is implicated in subunit movement. Contacts the P site tRNA; the 5S rRNA and some of its associated proteins might help stabilize positioning of ribosome-bound tRNAs. The protein is Large ribosomal subunit protein uL5 of Aliivibrio salmonicida (strain LFI1238) (Vibrio salmonicida (strain LFI1238)).